The primary structure comprises 340 residues: Dihydroorotate dehydrogenase (quinone) (340 aa).

FMN-binding positions include 62-66 and threonine 86; that span reads AGMDK. Lysine 66 provides a ligand contact to substrate. 111–115 lines the substrate pocket; sequence NRMGF. Residues asparagine 139 and asparagine 172 each contribute to the FMN site. A substrate-binding site is contributed by asparagine 172. The active-site Nucleophile is serine 175. Asparagine 177 contributes to the substrate binding site. Lysine 217 and threonine 245 together coordinate FMN. Residue 246–247 coordinates substrate; the sequence is NT. Residues glycine 268, glycine 297, and 318-319 contribute to the FMN site; that span reads YS.

It belongs to the dihydroorotate dehydrogenase family. Type 2 subfamily. As to quaternary structure, monomer. FMN is required as a cofactor.

The protein resides in the cell membrane. It catalyses the reaction (S)-dihydroorotate + a quinone = orotate + a quinol. Its pathway is pyrimidine metabolism; UMP biosynthesis via de novo pathway; orotate from (S)-dihydroorotate (quinone route): step 1/1. Functionally, catalyzes the conversion of dihydroorotate to orotate with quinone as electron acceptor. The polypeptide is Dihydroorotate dehydrogenase (quinone) (Shewanella woodyi (strain ATCC 51908 / MS32)).